The following is a 584-amino-acid chain: DNA ligase (584 aa).

ATP is bound at residue Glu249. The active-site N6-AMP-lysine intermediate is the Lys251. 6 residues coordinate ATP: Arg256, Arg271, Glu301, Phe341, Arg416, and Lys422.

It belongs to the ATP-dependent DNA ligase family. Mg(2+) serves as cofactor.

It carries out the reaction ATP + (deoxyribonucleotide)n-3'-hydroxyl + 5'-phospho-(deoxyribonucleotide)m = (deoxyribonucleotide)n+m + AMP + diphosphate.. In terms of biological role, DNA ligase that seals nicks in double-stranded DNA during DNA replication, DNA recombination and DNA repair. This is DNA ligase from Pyrobaculum neutrophilum (strain DSM 2338 / JCM 9278 / NBRC 100436 / V24Sta) (Thermoproteus neutrophilus).